The following is a 189-amino-acid chain: MAAKQPPPLMKKHSQTDLVSRLKTRKILGVGGEDDDGEVHRSKISQVLGNEIKFAVREPLGLRVWQFLSAMLFSSVAIMALALPDQLYDAVFDGAEVTSKTPIRLYGGALLSISLIMWNALYTAEKVIIRWTLLTEACYFGVQSLVVTATLAETGLMSLGTLLLLASRLLFVIVSIYYYYQVGRKPKKV.

Residues 1–63 (MAAKQPPPLM…FAVREPLGLR (63 aa)) lie on the Cytoplasmic side of the membrane. The residue at position 14 (Ser14) is a Phosphoserine. The helical transmembrane segment at 64–84 (VWQFLSAMLFSSVAIMALALP) threads the bilayer. Topologically, residues 85–108 (DQLYDAVFDGAEVTSKTPIRLYGG) are extracellular. The chain crosses the membrane as a helical span at residues 109 to 129 (ALLSISLIMWNALYTAEKVII). Position 130 (Arg130) is a topological domain, cytoplasmic. A helical membrane pass occupies residues 131-151 (WTLLTEACYFGVQSLVVTATL). Over 152–155 (AETG) the chain is Extracellular. Residues 156 to 176 (LMSLGTLLLLASRLLFVIVSI) traverse the membrane as a helical segment. The Cytoplasmic portion of the chain corresponds to 177–189 (YYYYQVGRKPKKV).

The protein resides in the membrane. This Rattus norvegicus (Rat) protein is Tumor protein p53-inducible protein 11 (Tp53i11).